The following is a 130-amino-acid chain: Large ribosomal subunit protein bL12 (130 aa).

It belongs to the bacterial ribosomal protein bL12 family. In terms of assembly, homodimer. Part of the ribosomal stalk of the 50S ribosomal subunit. Forms a multimeric L10(L12)X complex, where L10 forms an elongated spine to which 2 to 4 L12 dimers bind in a sequential fashion. Binds GTP-bound translation factors.

Functionally, forms part of the ribosomal stalk which helps the ribosome interact with GTP-bound translation factors. Is thus essential for accurate translation. The protein is Large ribosomal subunit protein bL12 of Mycobacterium bovis (strain ATCC BAA-935 / AF2122/97).